Reading from the N-terminus, the 319-residue chain is Acetyl-coenzyme A carboxylase carboxyl transferase subunit alpha (319 aa).

Positions 35-296 (NIDEEVQRLR…KTQLLADLED (262 aa)) constitute a CoA carboxyltransferase C-terminal domain.

It belongs to the AccA family. As to quaternary structure, acetyl-CoA carboxylase is a heterohexamer composed of biotin carboxyl carrier protein (AccB), biotin carboxylase (AccC) and two subunits each of ACCase subunit alpha (AccA) and ACCase subunit beta (AccD).

The protein resides in the cytoplasm. The catalysed reaction is N(6)-carboxybiotinyl-L-lysyl-[protein] + acetyl-CoA = N(6)-biotinyl-L-lysyl-[protein] + malonyl-CoA. The protein operates within lipid metabolism; malonyl-CoA biosynthesis; malonyl-CoA from acetyl-CoA: step 1/1. Functionally, component of the acetyl coenzyme A carboxylase (ACC) complex. First, biotin carboxylase catalyzes the carboxylation of biotin on its carrier protein (BCCP) and then the CO(2) group is transferred by the carboxyltransferase to acetyl-CoA to form malonyl-CoA. This Edwardsiella ictaluri (strain 93-146) protein is Acetyl-coenzyme A carboxylase carboxyl transferase subunit alpha.